A 563-amino-acid chain; its full sequence is BOS complex subunit NCLN (563 aa).

Positions 1 to 42 (MLEEAGEVLENMLKASCLPLGFIVFLPAVLLLVAPPLPAADA) are cleaved as a signal peptide. Topologically, residues 43–522 (AHEFTVYRMQ…VMNAYRVKPA (480 aa)) are lumenal. Asparagine 241 and asparagine 428 each carry an N-linked (GlcNAc...) asparagine glycan. The chain crosses the membrane as a helical span at residues 523-543 (IFDLLLAVCIGAYLGMAYTAV). At 544-563 (QHFDLLYKTVQRLLVKAKTQ) the chain is on the cytoplasmic side.

It belongs to the nicastrin family. As to quaternary structure, component of the back of Sec61 (BOS) complex, composed of NCLN/Nicalin, NOMO1 and TMEM147. The BOS complex is part of the multi-pass translocon (MPT) complex, composed of three subcomplexes, the GEL complex (composed of RAB5IF/OPTI and TMCO1), the BOS complex (composed of NCLN/Nicalin, NOMO1 and TMEM147) and the PAT complex (composed of WDR83OS/Asterix and CCDC47). The MPT complex associates with the SEC61 complex.

Its subcellular location is the endoplasmic reticulum membrane. In terms of biological role, component of the multi-pass translocon (MPT) complex that mediates insertion of multi-pass membrane proteins into the lipid bilayer of membranes. The MPT complex takes over after the SEC61 complex: following membrane insertion of the first few transmembrane segments of proteins by the SEC61 complex, the MPT complex occludes the lateral gate of the SEC61 complex to promote insertion of subsequent transmembrane regions. May antagonize Nodal signaling and subsequent organization of axial structures during mesodermal patterning, via its interaction with NOMO. The protein is BOS complex subunit NCLN of Canis lupus familiaris (Dog).